A 155-amino-acid chain; its full sequence is Small ribosomal subunit protein uS7cz/uS7cy (155 aa).

Belongs to the universal ribosomal protein uS7 family. Part of the 30S ribosomal subunit.

The protein localises to the plastid. It is found in the chloroplast. Its function is as follows. One of the primary rRNA binding proteins, it binds directly to 16S rRNA where it nucleates assembly of the head domain of the 30S subunit. The chain is Small ribosomal subunit protein uS7cz/uS7cy (rps7-A) from Lactuca sativa (Garden lettuce).